The following is a 169-amino-acid chain: Photosystem I assembly protein Ycf3 (169 aa).

TPR repeat units lie at residues 35–68, 72–105, and 120–153; these read AFSY…EIDP, SYIL…NPAL, and GEQA…APSN.

The protein belongs to the Ycf3 family.

The protein localises to the plastid. Its subcellular location is the chloroplast thylakoid membrane. Essential for the assembly of the photosystem I (PSI) complex. May act as a chaperone-like factor to guide the assembly of the PSI subunits. This chain is Photosystem I assembly protein Ycf3, found in Chaetosphaeridium globosum (Charophycean green alga).